Reading from the N-terminus, the 312-residue chain is Cell division control protein 2 homolog D (312 aa).

Positions 14–304 (FVKLEKVGEG…AKKAMEHPYF (291 aa)) constitute a Protein kinase domain. ATP is bound by residues 20–28 (VGEGTYGKV) and Lys-43. A Phosphothreonine modification is found at Thr-24. Tyr-25 carries the phosphotyrosine modification. The active-site Proton acceptor is Asp-145. Residue Thr-179 is modified to Phosphothreonine; by CAK.

Belongs to the protein kinase superfamily. CMGC Ser/Thr protein kinase family. CDC2/CDKX subfamily.

The catalysed reaction is L-seryl-[protein] + ATP = O-phospho-L-seryl-[protein] + ADP + H(+). It catalyses the reaction L-threonyl-[protein] + ATP = O-phospho-L-threonyl-[protein] + ADP + H(+). It carries out the reaction [DNA-directed RNA polymerase] + ATP = phospho-[DNA-directed RNA polymerase] + ADP + H(+). Functionally, plays a key role in the control of the eukaryotic cell cycle. This is Cell division control protein 2 homolog D (CDC2D) from Antirrhinum majus (Garden snapdragon).